We begin with the raw amino-acid sequence, 833 residues long: DNA ligase (833 aa).

Residues 35 to 39 (DADYD), 84 to 85 (SL), and Glu-115 contribute to the NAD(+) site. Lys-117 serves as the catalytic N6-AMP-lysine intermediate. Residues Arg-138, Glu-175, Lys-292, and Lys-316 each contribute to the NAD(+) site. 4 residues coordinate Zn(2+): Cys-410, Cys-413, Cys-428, and Cys-434. Residues 750-833 (LQTGPLDGQT…AFLGDHGQQP (84 aa)) form the BRCT domain.

Belongs to the NAD-dependent DNA ligase family. LigA subfamily. Mg(2+) is required as a cofactor. Mn(2+) serves as cofactor.

It carries out the reaction NAD(+) + (deoxyribonucleotide)n-3'-hydroxyl + 5'-phospho-(deoxyribonucleotide)m = (deoxyribonucleotide)n+m + AMP + beta-nicotinamide D-nucleotide.. DNA ligase that catalyzes the formation of phosphodiester linkages between 5'-phosphoryl and 3'-hydroxyl groups in double-stranded DNA using NAD as a coenzyme and as the energy source for the reaction. It is essential for DNA replication and repair of damaged DNA. The protein is DNA ligase of Xanthomonas euvesicatoria pv. vesicatoria (strain 85-10) (Xanthomonas campestris pv. vesicatoria).